We begin with the raw amino-acid sequence, 468 residues long: 3-isopropylmalate dehydratase large subunit (468 aa).

3 residues coordinate [4Fe-4S] cluster: Cys-347, Cys-407, and Cys-410.

It belongs to the aconitase/IPM isomerase family. LeuC type 1 subfamily. As to quaternary structure, heterodimer of LeuC and LeuD. [4Fe-4S] cluster serves as cofactor.

The enzyme catalyses (2R,3S)-3-isopropylmalate = (2S)-2-isopropylmalate. The protein operates within amino-acid biosynthesis; L-leucine biosynthesis; L-leucine from 3-methyl-2-oxobutanoate: step 2/4. Catalyzes the isomerization between 2-isopropylmalate and 3-isopropylmalate, via the formation of 2-isopropylmaleate. The protein is 3-isopropylmalate dehydratase large subunit of Campylobacter jejuni subsp. jejuni serotype O:23/36 (strain 81-176).